We begin with the raw amino-acid sequence, 246 residues long: MWVGIISLFPEMFRSVTDFGVTGQAVKKGLLSIETWNPRDFTHDKHRTVDDRPYGGGPGMLMMVQPLRDAIQTAKQAAPGKTKVIYLSPQGRKLDQQGVEELATNENLLLICGRYEGVDERIIQSEVDEEWSIGDFVMTGGELPAMTLIDSVSRFVPGVLGDFASAEEDSFANGLLDCPHYTRPEVLDDKDVPSVLKSGNHKDIRRWRLKQSLGRTWLRRPELLENLALTDEQEQLLAEFIKEQRS.

S-adenosyl-L-methionine contacts are provided by residues Gly113 and 133 to 138; that span reads IGDFVM.

It belongs to the RNA methyltransferase TrmD family. In terms of assembly, homodimer.

The protein localises to the cytoplasm. The enzyme catalyses guanosine(37) in tRNA + S-adenosyl-L-methionine = N(1)-methylguanosine(37) in tRNA + S-adenosyl-L-homocysteine + H(+). In terms of biological role, specifically methylates guanosine-37 in various tRNAs. The chain is tRNA (guanine-N(1)-)-methyltransferase from Vibrio atlanticus (strain LGP32) (Vibrio splendidus (strain Mel32)).